Reading from the N-terminus, the 429-residue chain is D-amino acid dehydrogenase (429 aa).

3 to 17 (VLILGSGVIGTTTAW) serves as a coordination point for FAD.

Belongs to the DadA oxidoreductase family. Requires FAD as cofactor.

The enzyme catalyses a D-alpha-amino acid + A + H2O = a 2-oxocarboxylate + AH2 + NH4(+). The protein operates within amino-acid degradation; D-alanine degradation; NH(3) and pyruvate from D-alanine: step 1/1. Functionally, oxidative deamination of D-amino acids. The sequence is that of D-amino acid dehydrogenase from Xanthomonas campestris pv. campestris (strain 8004).